Here is a 303-residue protein sequence, read N- to C-terminus: Glycine--tRNA ligase alpha subunit (303 aa).

This sequence belongs to the class-II aminoacyl-tRNA synthetase family. As to quaternary structure, tetramer of two alpha and two beta subunits.

Its subcellular location is the cytoplasm. It carries out the reaction tRNA(Gly) + glycine + ATP = glycyl-tRNA(Gly) + AMP + diphosphate. The polypeptide is Glycine--tRNA ligase alpha subunit (Salmonella paratyphi A (strain ATCC 9150 / SARB42)).